The following is a 338-amino-acid chain: Fructose-1,6-bisphosphatase class 1 1 (338 aa).

Positions 91, 113, 115, and 116 each coordinate Mg(2+). Substrate contacts are provided by residues 116-119, N208, and K274; that span reads DGSS. Residue E280 participates in Mg(2+) binding.

It belongs to the FBPase class 1 family. Homotetramer. It depends on Mg(2+) as a cofactor.

It localises to the cytoplasm. It catalyses the reaction beta-D-fructose 1,6-bisphosphate + H2O = beta-D-fructose 6-phosphate + phosphate. It participates in carbohydrate biosynthesis; gluconeogenesis. This Cupriavidus metallidurans (strain ATCC 43123 / DSM 2839 / NBRC 102507 / CH34) (Ralstonia metallidurans) protein is Fructose-1,6-bisphosphatase class 1 1.